The following is a 571-amino-acid chain: Optineurin (571 aa).

Disordered stretches follow at residues 1 to 32 (MSHQ…HPNL) and 100 to 144 (LSHE…DQLR). A coiled-coil region spans residues 38 to 170 (EELLQQMKEL…VSELQLKLNS (133 aa)). The segment at 58 to 209 (MKLNNQAMKG…GPTRTVSIGT (152 aa)) is interaction with Rab8. Composition is skewed to basic and acidic residues over residues 100 to 123 (LSHE…RSSE) and 130 to 143 (RLPR…KDQL). An LIR motif is present at residues 176-181 (DSFVEI). A Phosphoserine; by TBK1 modification is found at serine 177. Positions 186–197 (GEAEGSVKEIKH) are enriched in basic and acidic residues. Disordered stretches follow at residues 186-210 (GEAE…IGTS) and 255-291 (VSDF…TVGS). Residue serine 198 is modified to Phosphoserine. The segment covering 201–210 (PTRTVSIGTS) has biased composition (polar residues). Residues 233–502 (CLREGNQKVE…LLKENDAFED (270 aa)) adopt a coiled-coil conformation. Composition is skewed to basic and acidic residues over residues 255 to 268 (VSDF…RSEI) and 275 to 286 (STEKENEEEKGP). Position 336 is a phosphoserine (serine 336). Positions 405–571 (TRKESEKVDR…LQIHVMDCII (167 aa)) are interaction with HD. The segment at 406–514 (RKESEKVDRA…RQSLMEMQSR (109 aa)) is interaction with MYO6. Residues 468 to 473 (DFHAER) carry the UBAN motif. Residue serine 520 is modified to Phosphoserine. The CCHC NOA-type zinc-finger motif lies at 541-571 (QRNIPIHSCPKCGEVLPDIDTLQIHVMDCII). Zn(2+) contacts are provided by cysteine 549, cysteine 552, histidine 565, and cysteine 569.

In terms of assembly, self-associates. Interacts with HD. Interacts with GTF3A. Interacts with MYO6. Interacts (via UBAN) with ubiquitinated TFRC. Interacts with GTP-bound Rab8 (RAB8A and/or RAB8B). Interacts with TBC1D17. Interacts with TBK1. Interacts with TRAF3. Binds to linear ubiquitin chains. Interacts with LC3 family members MAP1LC3A, MAP1LC3B, GABARAP, GABARAPL1 and GABARAPL2; OPTN phosphorylation increases the association (at least with MAP1LC3B). Interacts with RAB12; the interaction may be indirect. Interacts with TBK1; this interaction leads to the Golgi localization of TBK1 and its subsequent activation. Interacts with palmitoyltransferase ZDHHC17/HIP14; the interaction does not lead to palmitoylation of OPTN. Interacts with CYLD. Interacts with TOM1; the interaction is indirect and is mediated by MYO6, which acts as a bridge between TOM1 and OPTN. Interacts with USP12; the interaction is independent of USP12 deubiquitinase activity and may be involved in regulation of autophagic flux. Phosphorylated by TBK1, leading to restrict bacterial proliferation in case of infection.

Its subcellular location is the cytoplasm. It localises to the perinuclear region. It is found in the golgi apparatus. The protein resides in the trans-Golgi network. The protein localises to the cytoplasmic vesicle. Its subcellular location is the autophagosome. It localises to the recycling endosome. Plays an important role in the maintenance of the Golgi complex, in membrane trafficking, in exocytosis, through its interaction with myosin VI and Rab8. Links myosin VI to the Golgi complex and plays an important role in Golgi ribbon formation. Negatively regulates the induction of IFNB in response to RNA virus infection. Plays a neuroprotective role in the eye and optic nerve. Probably part of the TNF-alpha signaling pathway that can shift the equilibrium toward induction of cell death. May act by regulating membrane trafficking and cellular morphogenesis via a complex that contains Rab8 and huntingtin (HD). Mediates the interaction of Rab8 with the probable GTPase-activating protein TBC1D17 during Rab8-mediated endocytic trafficking, such as that of transferrin receptor (TFRC/TfR); regulates Rab8 recruitment to tubules emanating from the endocytic recycling compartment. Autophagy receptor that interacts directly with both the cargo to become degraded and an autophagy modifier of the MAP1 LC3 family; targets ubiquitin-coated bacteria (xenophagy) and appears to function in the same pathway as SQSTM1 and CALCOCO2/NDP52. The protein is Optineurin (OPTN) of Macaca fascicularis (Crab-eating macaque).